Here is a 663-residue protein sequence, read N- to C-terminus: 4-hydroxy-3-methylbut-2-en-1-yl diphosphate synthase (flavodoxin) (663 aa).

[4Fe-4S] cluster contacts are provided by cysteine 568, cysteine 571, cysteine 602, and glutamate 609.

This sequence belongs to the IspG family. [4Fe-4S] cluster is required as a cofactor.

The enzyme catalyses (2E)-4-hydroxy-3-methylbut-2-enyl diphosphate + oxidized [flavodoxin] + H2O + 2 H(+) = 2-C-methyl-D-erythritol 2,4-cyclic diphosphate + reduced [flavodoxin]. It participates in isoprenoid biosynthesis; isopentenyl diphosphate biosynthesis via DXP pathway; isopentenyl diphosphate from 1-deoxy-D-xylulose 5-phosphate: step 5/6. Its function is as follows. Converts 2C-methyl-D-erythritol 2,4-cyclodiphosphate (ME-2,4cPP) into 1-hydroxy-2-methyl-2-(E)-butenyl 4-diphosphate. This is 4-hydroxy-3-methylbut-2-en-1-yl diphosphate synthase (flavodoxin) from Leptospira borgpetersenii serovar Hardjo-bovis (strain JB197).